An 805-amino-acid chain; its full sequence is Sucrose synthase 1 (805 aa).

Positions 274-751 (MVFNVVILSP…GLQRIYEKYT (478 aa)) are GT-B glycosyltransferase.

Belongs to the glycosyltransferase 1 family. Plant sucrose synthase subfamily.

The enzyme catalyses an NDP-alpha-D-glucose + D-fructose = a ribonucleoside 5'-diphosphate + sucrose + H(+). Sucrose-cleaving enzyme that provides UDP-glucose and fructose for various metabolic pathways. In Tulipa gesneriana (Garden tulip), this protein is Sucrose synthase 1.